The following is a 386-amino-acid chain: Synaptotagmin-5 (386 aa).

The segment covering 1–16 (MFPEPPTPGPPSPDTP) has biased composition (pro residues). The tract at residues 1-23 (MFPEPPTPGPPSPDTPPDSSRIS) is disordered. Residues 1-24 (MFPEPPTPGPPSPDTPPDSSRISH) lie on the Vesicular side of the membrane. A helical membrane pass occupies residues 25-45 (GPVPPWALATIVLVSGLLIFS). The Cytoplasmic segment spans residues 46–386 (CCFCLYRKSC…PDRVRLLPAP (341 aa)). 2 C2 domains span residues 108–227 (ELGR…QAWR) and 239–372 (KLGD…AQWH). Residues Leu-138, Asp-139, Asp-145, Asp-197, Phe-198, Asp-199, Ser-202, Asp-205, Asp-270, Asp-276, Asp-330, and Asp-332 each coordinate Ca(2+).

Belongs to the synaptotagmin family. In terms of assembly, homodimer. Interacts with both alpha- and beta-tubulin. Ca(2+) is required as a cofactor.

Its subcellular location is the cytoplasmic vesicle. It localises to the secretory vesicle. The protein localises to the synaptic vesicle membrane. It is found in the recycling endosome membrane. In terms of biological role, may be involved in Ca(2+)-dependent exocytosis of secretory vesicles through Ca(2+) and phospholipid binding to the C2 domain or may serve as Ca(2+) sensors in the process of vesicular trafficking and exocytosis. Regulates the Ca(2+)-dependent secretion of norepinephrine in PC12 cells. Required for export from the endocytic recycling compartment to the cell surface. This Homo sapiens (Human) protein is Synaptotagmin-5 (SYT5).